We begin with the raw amino-acid sequence, 138 residues long: Putative pre-16S rRNA nuclease (138 aa).

Belongs to the YqgF nuclease family.

It is found in the cytoplasm. In terms of biological role, could be a nuclease involved in processing of the 5'-end of pre-16S rRNA. This chain is Putative pre-16S rRNA nuclease, found in Mycoplasma genitalium (strain ATCC 33530 / DSM 19775 / NCTC 10195 / G37) (Mycoplasmoides genitalium).